An 87-amino-acid chain; its full sequence is Small ribosomal subunit protein bS20 (87 aa).

The tract at residues 1 to 26 (MANIKSAKKRAVQSEKRRKHNASRRS) is disordered.

The protein belongs to the bacterial ribosomal protein bS20 family.

In terms of biological role, binds directly to 16S ribosomal RNA. The polypeptide is Small ribosomal subunit protein bS20 (Yersinia enterocolitica serotype O:8 / biotype 1B (strain NCTC 13174 / 8081)).